Reading from the N-terminus, the 568-residue chain is Acetate--CoA ligase CCL3 (568 aa).

ATP-binding positions include threonine 204–lysine 212, histidine 340–serine 345, aspartate 437, isoleucine 449–arginine 452, and lysine 547. Residues threonine 272–histidine 340 form an SBD1 region. The segment at threonine 341–tyrosine 417 is SBD2.

This sequence belongs to the ATP-dependent AMP-binding enzyme family. As to expression, mostly expressed in glandular trichomes (lupulin glands) after flowering and in old leaves, and, to a lower extent, in stems, young leaves, cones and flowers.

It is found in the cytoplasm. The protein resides in the cytosol. It carries out the reaction acetate + ATP + CoA = acetyl-CoA + AMP + diphosphate. The enzyme catalyses propanoate + ATP + CoA = propanoyl-CoA + AMP + diphosphate. It catalyses the reaction butanoate + ATP + CoA = butanoyl-CoA + AMP + diphosphate. The catalysed reaction is 3-methylbutanoate + ATP + CoA = 3-methylbutanoyl-CoA + AMP + diphosphate. It carries out the reaction pentanoate + ATP + CoA = pentanoyl-CoA + AMP + diphosphate. The enzyme catalyses hexanoate + ATP + CoA = hexanoyl-CoA + AMP + diphosphate. It catalyses the reaction 2-methylpropanoate + ATP + CoA = 2-methylpropanoyl-CoA + AMP + diphosphate. The catalysed reaction is 2-methylbutanoate + ATP + CoA = 2-methylbutanoyl-CoA + AMP + diphosphate. It carries out the reaction 2-methylpentanoate + ATP + CoA = 2-methylpentanoyl-CoA + AMP + diphosphate. The enzyme catalyses 3-methylpentanoate + ATP + CoA = 3-methylpentanoyl-CoA + AMP + diphosphate. It catalyses the reaction 4-methylpentanoate + ATP + CoA = 4-methylpentanoyl-CoA + AMP + diphosphate. The protein operates within secondary metabolite biosynthesis. Involved in the biosynthesis of prenylated phenolics natural products which contribute to the bitter taste of beer and display broad biological activities. Catalyzes the ligation of CoA on propanoate to produce propanoyl-CoA. Can also use 2-methylpropanoate (isobutyric acid), acetate, butanoate, isovalerate, pentanoate, hexanoate, 2-methylbutanoate, 2-methylpentanoate, 3-methylpentanoate and 4-methylpentanoate as substrates with a lower efficiency. Triggers the formation of very short chain acyl-CoAs from the corresponding fatty acids, including acetic acid, propanoic acid, butyric acid and its isomer. The chain is Acetate--CoA ligase CCL3 from Humulus lupulus (European hop).